The following is a 3103-amino-acid chain: Extracellular matrix protein 3 (3103 aa).

The first 19 residues, 1-19 (MASALLCFLAAILPGMIAA), serve as a signal peptide directing secretion. Residues 20 to 3047 (QNTWVLGTSD…TYELAPKGTN (3028 aa)) lie on the Extracellular side of the membrane. CSPG repeat units follow at residues 289–388 (PPSL…LEIV), 411–499 (APVV…FRMT), 520–630 (APIV…FRVV), 656–762 (PPEM…FVVQ), 784–875 (QPPT…LEIT), 901–993 (LPPG…LTLS), 1022–1124 (APNV…FRCT), 1145–1238 (EEPQ…VLLT), 1259–1357 (TPRL…FDIT), 1378–1470 (VHPS…FQVT), 1490–1579 (KEPV…FIVT), and 1613–1710 (APQI…VEVR). N-linked (GlcNAc...) asparagine glycans are attached at residues asparagine 330 and asparagine 453. N-linked (GlcNAc...) asparagine glycans are attached at residues asparagine 989, asparagine 1024, asparagine 1042, asparagine 1207, asparagine 1294, asparagine 1321, and asparagine 1327. N-linked (GlcNAc...) asparagine glycosylation is found at asparagine 1542, asparagine 1674, asparagine 1679, asparagine 1725, and asparagine 1739. 4 consecutive Calx-beta domains span residues 1717–1816 (LPNQ…IILH), 1829–1942 (AVVT…VKLS), 1956–2062 (NVII…LVLN), and 2077–2179 (ITIN…LVLG). Residues asparagine 2080, asparagine 2195, asparagine 2274, asparagine 2385, and asparagine 2932 are each glycosylated (N-linked (GlcNAc...) asparagine). Residues 2197 to 2302 (TVVTVHDVGD…MREAFTLHIT (106 aa)) form the Calx-beta 5 domain. Residues 2983–3013 (SSGIGKRETEHHAISSRQRRQANSEALVDPA) are disordered. A helical membrane pass occupies residues 3048–3068 (VVMIAVVIGVILIILLVALVI). Residues 3069-3103 (GVVVRRRQAKQQPVVVVNGSAKVVSNVHFDDNTEV) lie on the Cytoplasmic side of the membrane.

This sequence belongs to the FRAS1 family. Component of extracellular matrix fibers that interact with PMC filopodia during gastrulation (at protein level).

The protein localises to the cell membrane. Functionally, extracellular matrix protein that may serve as substrate for the migratory primary mesenchyme cells (PMCs), the interaction possibly providing guidance information to migrating PMCs. The polypeptide is Extracellular matrix protein 3 (ECM3) (Lytechinus variegatus (Green sea urchin)).